The following is a 695-amino-acid chain: MESSRGPPRVKNKAPAPVQISAEQLLREAVDRQEVNLQTPTQRFADLEELKEYQGRKRKEFEDYVRRNRVRLSNWLQYAQWELEQKEFARARSVFERALDVHPNNTQLWIRYVQAEIKNRNINHARNLLDRAVTRLPRVTSLWYQYLYVMEMLGDIPGTRQVFDRWMKWQPDEQAWSAYIRLEKRYGEFDRAREIFRAFTAVHPEPRTWLKWAKFEEEYGTSDTVREVFQTAIQTIAETLGDDAVDERIFIAFARYEARLREYERARAIYKFGLDNLPRSKSMTLHAHYTTFEKQFGDKEGVEDVILTKRRRLYEEQVKENAKNYDVWFDFARLEESGGDVDRTREVYERAIAQVPPTQEKRHWRRYIFLFLFYAIWEERETKDIGRARQIYDTCLNLIPHKKFTFAKVWVAKAHFEIRQGQLTTARKTLGRAIGMCPKDKIFKEYILLEQKLYEFERCRTLYEKHVMYNPANCQTWIKWAELERGLDDLERTRAIFELAVSQPILDMPEVVWKAYIDFEEEEGEYERTRALYERLLEKADHPKVWISYAQFEINIPDEAEEEEETEEEVEEKPVSEEAKARARKIFERAHKSMKERELKAERVSLLNAWLAFEKTHGSAEDIEKIQKQMPRKTKKKRKLEDDTWEEYVDYIFPADDQQTKNLSSLLAMANAWKQQAAGGAGGAAVDEAAQGGSS.

HAT repeat units follow at residues 52–84, 86–118, 120–152, 154–185, 187–218, 220–259, 261–295, 305–337, 339–373, 383–419, 421–452, 454–486, 488–522, 524–555, 578–616, and 621–654; these read EYQG…WELE, KEFA…AEIK, RNIN…VMEM, GDIP…LEKR, GEFD…FEEE, GTSD…YEAR, REYE…FEKQ, VILT…LEES, GDVD…LFLF, KDIG…FEIR, GQLT…LEQK, YEFE…LERG, DDLE…FEEE, GEYE…FEIN, EAKA…FEKT, and EDIE…YIFP.

The protein belongs to the crooked-neck family. In terms of assembly, associated with the spliceosome.

The protein localises to the nucleus. Its function is as follows. Involved in pre-mRNA splicing and cell cycle progression. Required for the spliceosome assembly and initiation of the DNA replication. The sequence is that of Pre-mRNA-splicing factor clf-1 (clf-1) from Neurospora crassa (strain ATCC 24698 / 74-OR23-1A / CBS 708.71 / DSM 1257 / FGSC 987).